We begin with the raw amino-acid sequence, 128 residues long: Ribosome-binding factor A (128 aa).

This sequence belongs to the RbfA family. In terms of assembly, monomer. Binds 30S ribosomal subunits, but not 50S ribosomal subunits or 70S ribosomes.

It is found in the cytoplasm. Functionally, one of several proteins that assist in the late maturation steps of the functional core of the 30S ribosomal subunit. Associates with free 30S ribosomal subunits (but not with 30S subunits that are part of 70S ribosomes or polysomes). Required for efficient processing of 16S rRNA. May interact with the 5'-terminal helix region of 16S rRNA. The chain is Ribosome-binding factor A from Idiomarina loihiensis (strain ATCC BAA-735 / DSM 15497 / L2-TR).